Here is a 122-residue protein sequence, read N- to C-terminus: Small ribosomal subunit protein uS13 (122 aa).

Residues V98 to K122 are disordered. The span at Q101–K122 shows a compositional bias: basic residues.

This sequence belongs to the universal ribosomal protein uS13 family. As to quaternary structure, part of the 30S ribosomal subunit. Forms a loose heterodimer with protein S19. Forms two bridges to the 50S subunit in the 70S ribosome.

Functionally, located at the top of the head of the 30S subunit, it contacts several helices of the 16S rRNA. In the 70S ribosome it contacts the 23S rRNA (bridge B1a) and protein L5 of the 50S subunit (bridge B1b), connecting the 2 subunits; these bridges are implicated in subunit movement. Contacts the tRNAs in the A and P-sites. The polypeptide is Small ribosomal subunit protein uS13 (Thermosipho africanus (strain TCF52B)).